The following is a 443-amino-acid chain: KH domain-containing, RNA-binding, signal transduction-associated protein 1 (443 aa).

The disordered stretch occupies residues 1 to 95; it reads MQRRDDPAAR…LLPPSATAAA (95 aa). Residues serine 18 and serine 20 each carry the phosphoserine modification. The residue at position 21 (lysine 21) is an N6-acetyllysine. Residue serine 29 is modified to Phosphoserine. Threonine 33 carries the phosphothreonine modification. Residues arginine 45 and arginine 52 each carry the asymmetric dimethylarginine; by PRMT1 modification. Serine 58 is subject to Phosphoserine. Positions 61–72 are enriched in pro residues; that stretch reads TQPPPLLPPSNP. Positions 81–95 are enriched in low complexity; it reads SAPTPLLPPSATAAA. A Phosphothreonine; by MAPK1 modification is found at threonine 84. Glycyl lysine isopeptide (Lys-Gly) (interchain with G-Cter in SUMO2) cross-links involve residues lysine 96 and lysine 102. The tract at residues 100 to 260 is involved in homodimerization; sequence ENKYLPELMA…VKKFLVPDMM (161 aa). Serine 113 is subject to Phosphoserine. Residue lysine 139 forms a Glycyl lysine isopeptide (Lys-Gly) (interchain with G-Cter in SUMO2) linkage. Position 150 is a phosphoserine (serine 150). Positions 171 to 197 constitute a KH domain; it reads NFVGKILGPQGNTIKRLQEETGAKISV. Lysine 175 carries the post-translational modification N6-acetyllysine; alternate. A Glycyl lysine isopeptide (Lys-Gly) (interchain with G-Cter in SUMO2); alternate cross-link involves residue lysine 175. The residue at position 183 (threonine 183) is a Phosphothreonine. Residues 280-317 are disordered; sequence PSRGRGVSVRGRGAAPPPPPVPRGRGVGPPRGALVRGT. Residues arginine 282, arginine 284, and arginine 291 each carry the omega-N-methylarginine modification. The segment covering 283–293 has biased composition (low complexity); sequence GRGVSVRGRGA. At arginine 304 the chain carries Asymmetric dimethylarginine; by PRMT1. Over residues 307–316 the composition is skewed to low complexity; that stretch reads GPPRGALVRG. Omega-N-methylarginine; by PRMT1 occurs at positions 310 and 315. Arginine 320 carries the dimethylated arginine; alternate modification. The residue at position 320 (arginine 320) is an Omega-N-methylarginine; by PRMT1; alternate. At arginine 325 the chain carries Omega-N-methylarginine; by PRMT1. Residues 326 to 345 are disordered; that stretch reads GATVTRGVPPPPTVRGAPTP. Dimethylated arginine; alternate occurs at positions 331 and 340. An omega-N-methylarginine; by PRMT1; alternate mark is found at arginine 331 and arginine 340. An Asymmetric dimethylarginine; alternate modification is found at arginine 331. An interaction with HNRNPA1 region spans residues 351-443; the sequence is GIQRIPLPPT…AYREHPYGRY (93 aa). A Phosphotyrosine modification is found at tyrosine 387. Serine 390 carries the post-translational modification Phosphoserine. Residues 400–420 are interaction with ZBTB7A; that stretch reads GHGELQDSYEAYGQDDWNGTR. Positions 411-443 are disordered; it reads YGQDDWNGTRPSLKAPPARPVKGAYREHPYGRY. Residue lysine 432 forms a Glycyl lysine isopeptide (Lys-Gly) (interchain with G-Cter in SUMO2) linkage. Positions 434 to 443 are enriched in basic and acidic residues; the sequence is AYREHPYGRY. Residues tyrosine 435, tyrosine 440, and tyrosine 443 each carry the phosphotyrosine; by PTK6 modification.

The protein belongs to the KHDRBS family. As to quaternary structure, self-associates to form homooligomers when bound to RNA, oligomerization appears to be limited when binding to proteins. Interacts with KHDRBS3/SLIM-2. Forms a trimeric complex in the nucleus consisting of BANP, HDAC6 and KHDRBS1/SAM68; HDAC6 keeps KHDRBS1 in a deacetylated state which inhibits the inclusion of CD44 alternate exons. The complex is disrupted by MAPK1/MAPK3-mediated phosphorylation of BANP which results in BANP export to the cytoplasm. This facilitates acetylation of KHDRBS1 and CD44 variant exon inclusion. Interacts with KHDRBS2/SLIM-1; heterooligomer formation of KHDRBS family proteins may modulate RNA substrate specificity. Interacts with PIK3R1, PLCG1. Interacts with RASA1, GRB2, SRC, CBP, PRMT1, APC, HNRNPA1. Interacts with PTK6 (via SH3 and SH2 domains). Forms a complex with ILF2, ILF3, YLPM1, RBMX, NCOA5 and PPP1CA. Binds WBP4/FBP21 (via WW domains), FNBP4/FBP30 (via WW domains). Interacts (via Arg/Gly-rich-flanked Pro-rich regions) with FYN (via the SH3 domain). Interacts with the non-receptor tyrosine kinase SRMS; the interaction leads to phosphorylation of KHDRBS1. Interacts with ZBTB7A; negatively regulates KHDRBS1 splicing activity toward BCL2L1. Post-translationally, tyrosine phosphorylated by several non-receptor tyrosine kinases including LCK, FYN and JAK3. Also tyrosine phosphorylated by the non-receptor tyrosine kinase SRMS in an EGF-dependent manner. Phosphorylation by PTK6 negatively regulates its RNA binding ability. Phosphorylation by PTK6 at Tyr-440 dictates the nuclear localization of KHDRBS1. In terms of processing, acetylated. Positively correlates with ability to bind RNA. Deacetylated by HDAC6; this regulates alternative splicing by inhibiting the inclusion of CD44 alternate exons. Arginine methylation is required for nuclear localization, Inhibits interaction with Src-like SH3 domains, but not interaction with WW domains of WBP4/FBP21 and FNBP4/FBP30.

The protein localises to the nucleus. Its subcellular location is the cytoplasm. It is found in the membrane. Functionally, recruited and tyrosine phosphorylated by several receptor systems, for example the T-cell, leptin and insulin receptors. Once phosphorylated, functions as an adapter protein in signal transduction cascades by binding to SH2 and SH3 domain-containing proteins. Role in G2-M progression in the cell cycle. Represses CBP-dependent transcriptional activation apparently by competing with other nuclear factors for binding to CBP. Also acts as a putative regulator of mRNA stability and/or translation rates and mediates mRNA nuclear export. Positively regulates the association of constitutive transport element (CTE)-containing mRNA with large polyribosomes and translation initiation. May not be involved in the nucleocytoplasmic export of unspliced (CTE)-containing RNA species. RNA-binding protein that plays a role in the regulation of alternative splicing and influences mRNA splice site selection and exon inclusion. Binds to RNA containing 5'-[AU]UAA-3' as a bipartite motif spaced by more than 15 nucleotides. Binds poly(A). Can regulate CD44 alternative splicing in a Ras pathway-dependent manner. In cooperation with HNRNPA1 modulates alternative splicing of BCL2L1 by promoting splicing toward isoform Bcl-X(S), and of SMN1. Can regulate alternative splicing of NRXN1 and NRXN3 in the laminin G-like domain 6 containing the evolutionary conserved neurexin alternative spliced segment 4 (AS4) involved in neurexin selective targeting to postsynaptic partners. In a neuronal activity-dependent manner cooperates synergistically with KHDRBS2/SLIM-1 in regulation of NRXN1 exon skipping at AS4. The cooperation with KHDRBS2/SLIM-1 is antagonistic for regulation of NXRN3 alternative splicing at AS4. This Rattus norvegicus (Rat) protein is KH domain-containing, RNA-binding, signal transduction-associated protein 1.